A 552-amino-acid chain; its full sequence is Putative transport protein HSM_0534 (552 aa).

5 consecutive transmembrane segments (helical) span residues 4–24 (IAITICILALVAVIGLWIGHW), 28–48 (GVGLGIGGVLFGGIIVAHFMN), 67–87 (LILFVYTIGIQVGPGFFASLL), 95–115 (GLATLIVVLGAVSVFVLYKVV), and 157–177 (MAYAMAYPFGICGILLSMWLI). 2 consecutive RCK C-terminal domains span residues 190–275 (KQFQ…VIGE) and 277–360 (IDMP…IIGN). 6 helical membrane-spanning segments follow: residues 370–390 (MLPVFIGIGLGVLLGSIPFYI), 402–424 (AGGPLVVALILARIGSVGKLYWF), 438–458 (IVLFLAVVGLKSGGGFVDTLV), 463–483 (LEWMGYGMFITFIPLMITGII), 495–515 (LCGLLAGSMTDPPALAFANAI), and 529–549 (VYPLSMFLRIMSPQLLAILLW).

The protein belongs to the AAE transporter (TC 2.A.81) family. YidE subfamily.

The protein resides in the cell membrane. This is Putative transport protein HSM_0534 from Histophilus somni (strain 2336) (Haemophilus somnus).